Here is a 508-residue protein sequence, read N- to C-terminus: Putative adenosylhomocysteinase 3 (508 aa).

Position 4 is a phosphoserine (Ser4). The interval 24–81 is disordered; the sequence is DQKQEFNKRPTKIGRRSLSRSISQSSTDSYSSAASYTDSSDDETSPRDKQQKNSKGSS. The segment covering 32–41 has biased composition (basic residues); the sequence is RPTKIGRRSL. Residues 42–61 are compositionally biased toward low complexity; that stretch reads SRSISQSSTDSYSSAASYTD. A phosphoserine mark is found at Ser46, Ser49, Ser52, and Ser55. Substrate contacts are provided by Thr133, Asp207, and Glu232. 233–235 contributes to the NAD(+) binding site; the sequence is SVT. Substrate-binding residues include Lys262 and Asp266. NAD(+) contacts are provided by residues Asn267, 298 to 303, Glu319, Asn354, 375 to 377, and Asn422; these read GEVGKG and IGH.

This sequence belongs to the adenosylhomocysteinase family. In terms of assembly, homotetramer. Forms heteromultimers with AHCYL1 (via the C-terminal region). Interacts with ITPR1; with lower affinity than AHCYL1 and maybe via ITPR1. Interacts with SLC4A4. Interacts with ZCCHC4. It depends on NAD(+) as a cofactor.

The protein resides in the cytoplasm. Its subcellular location is the microsome. It carries out the reaction S-adenosyl-L-homocysteine + H2O = L-homocysteine + adenosine. Its pathway is amino-acid biosynthesis; L-homocysteine biosynthesis; L-homocysteine from S-adenosyl-L-homocysteine: step 1/1. May regulate the electrogenic sodium/bicarbonate cotransporter SLC4A4 activity and Mg(2+)-sensitivity. On the contrary of its homolog AHCYL1, does not regulate ITPR1 sensitivity to inositol 1,4,5-trisphosphate. This Pongo abelii (Sumatran orangutan) protein is Putative adenosylhomocysteinase 3 (AHCYL2).